We begin with the raw amino-acid sequence, 530 residues long: NADH-quinone oxidoreductase subunit C/D (530 aa).

An NADH dehydrogenase I subunit C region spans residues 1–144 (MQEIQFIVPA…NPLCMANEET (144 aa)). Positions 171–530 (EYVVNIGPQH…LDYVVPDIDR (360 aa)) are NADH dehydrogenase I subunit D.

In the N-terminal section; belongs to the complex I 30 kDa subunit family. This sequence in the C-terminal section; belongs to the complex I 49 kDa subunit family. In terms of assembly, NDH-1 is composed of 13 different subunits. Subunits NuoB, CD, E, F, and G constitute the peripheral sector of the complex.

It is found in the cell inner membrane. The catalysed reaction is a quinone + NADH + 5 H(+)(in) = a quinol + NAD(+) + 4 H(+)(out). Its function is as follows. NDH-1 shuttles electrons from NADH, via FMN and iron-sulfur (Fe-S) centers, to quinones in the respiratory chain. The immediate electron acceptor for the enzyme in this species is believed to be a menaquinone. Couples the redox reaction to proton translocation (for every two electrons transferred, four hydrogen ions are translocated across the cytoplasmic membrane), and thus conserves the redox energy in a proton gradient. This Bacteroides thetaiotaomicron (strain ATCC 29148 / DSM 2079 / JCM 5827 / CCUG 10774 / NCTC 10582 / VPI-5482 / E50) protein is NADH-quinone oxidoreductase subunit C/D.